Here is a 287-residue protein sequence, read N- to C-terminus: Neuferricin homolog (287 aa).

The N-terminal stretch at 1–22 is a signal peptide; sequence MFGLLRHLFKFQFLFVVAAVLG. The 86-residue stretch at 61 to 146 folds into the Cytochrome b5 heme-binding domain; that stretch reads GTLFTPAELA…KPDDLIGLAG (86 aa). Residues 175 to 204 adopt a coiled-coil conformation; sequence YHHKFLELLEQARDAKRQVEELRARYPGCN.

It belongs to the cytochrome b5 family. MAPR subfamily.

The protein resides in the secreted. Heme-binding protein. This Drosophila melanogaster (Fruit fly) protein is Neuferricin homolog.